A 231-amino-acid chain; its full sequence is Large ribosomal subunit protein uL1 (231 aa).

It belongs to the universal ribosomal protein uL1 family. Part of the 50S ribosomal subunit.

Functionally, binds directly to 23S rRNA. The L1 stalk is quite mobile in the ribosome, and is involved in E site tRNA release. Its function is as follows. Protein L1 is also a translational repressor protein, it controls the translation of the L11 operon by binding to its mRNA. The polypeptide is Large ribosomal subunit protein uL1 (Neisseria meningitidis serogroup C (strain 053442)).